The sequence spans 132 residues: Small ribosomal subunit protein uS9 (132 aa).

The disordered stretch occupies residues 104–132 (GYLTRDPRMKERKKYGLRKARRAPQFSKR). The span at 113–132 (KERKKYGLRKARRAPQFSKR) shows a compositional bias: basic residues.

This sequence belongs to the universal ribosomal protein uS9 family.

This chain is Small ribosomal subunit protein uS9, found in Natranaerobius thermophilus (strain ATCC BAA-1301 / DSM 18059 / JW/NM-WN-LF).